A 212-amino-acid chain; its full sequence is Uridine kinase (212 aa).

13–20 (GASASGKS) provides a ligand contact to ATP.

This sequence belongs to the uridine kinase family.

It localises to the cytoplasm. It carries out the reaction uridine + ATP = UMP + ADP + H(+). The catalysed reaction is cytidine + ATP = CMP + ADP + H(+). The protein operates within pyrimidine metabolism; CTP biosynthesis via salvage pathway; CTP from cytidine: step 1/3. Its pathway is pyrimidine metabolism; UMP biosynthesis via salvage pathway; UMP from uridine: step 1/1. In Shewanella amazonensis (strain ATCC BAA-1098 / SB2B), this protein is Uridine kinase.